The sequence spans 116 residues: HTH-type transcriptional regulator SarV (116 aa).

Residues 51–74 (RDTLHFEMLWDTSKIDVIIRKIYK) constitute a DNA-binding region (H-T-H motif).

The protein belongs to the SarA family.

It localises to the cytoplasm. Functionally, part of the pathway by which MgrA and SarA control autolysis. This is HTH-type transcriptional regulator SarV (sarV) from Staphylococcus aureus (strain Mu50 / ATCC 700699).